Here is a 555-residue protein sequence, read N- to C-terminus: Carboxysome assembly protein CcmM (555 aa).

A has carbonic anhydrase (CA) activity region spans residues 1 to 209 (MAVRSTAAPP…CIAPLRNDQV (209 aa)). E56 serves as the catalytic Proton donor/acceptor. H75, H102, and H107 together coordinate Zn(2+). C194 and C200 form a disulfide bridge. The segment at 223-315 (SSEVASNSLG…RVLETIIQRP (93 aa)) is rbcS-like repeat 1, SSUL1. 2 disordered regions span residues 323-351 (TSFKAPASNTNGNGSYHSNGNGNGYSNGA) and 441-464 (NGQVAPSSSPRTVVSASSASSGTA). Low complexity-rich tracts occupy residues 330–351 (SNTNGNGSYHSNGNGNGYSNGA) and 445–464 (APSSSPRTVVSASSASSGTA). The segment at 347-440 (YSNGATSGKV…RVLESIIQRP (94 aa)) is rbcS-like repeat 2, SSUL2. The tract at residues 460–555 (SSGTATATAT…RVLETIIQRP (96 aa)) is rbcS-like repeat 3, SSUL3.

It belongs to the gamma-class carbonic anhydrase family. In terms of assembly, probable homotrimer; zinc is bound between adjacent monomers. Full length protein (M58) interacts with CcmN. The C-terminal RbcS-like domains (SSUL) bind to holo-RuBisCO, as does the M35 short form. It depends on Zn(2+) as a cofactor. Post-translationally, the first amino acid of the short form (equivalent to Val-226) is not seen in Edman degradation, while Ser-230 may be post-translationally modified. Migrates in gels as 2 about equal forms of about 60 and 35 kDa (called M58 and M35). They are probably the result of alternative translation initiation.

The protein resides in the carboxysome. The protein localises to the cytoplasm. It carries out the reaction hydrogencarbonate + H(+) = CO2 + H2O. Carbonic anhydrase (CA) activity is probably under redox control to remain inactive in the cytoplasm. Carbonic anhydrase (CA) activity of full-length protein and N-terminal fragment is inhibited by ethoxyzolamide. N-terminal fragment CA activity is activated under oxidizing conditions and inhibited under reducing conditions. Functionally, functions as a scaffold protein for the assembly of beta-carboxysomes, initiates carboxysome assembly by coalescing RuBisCO (ribulose bisphosphate carboxylase, rbcL-rbcS). Produced as a full-length (M58) and a short form (M35), possibly by alternative translation initiation; probably both forms are required for correct carboxysome assembly and growth. In this strain both forms are equally abundant. In terms of biological role, a moderately active carbonic anhydrase that catalyzes the reversible hydration of carbon dioxide. Essential to photosynthetic carbon dioxide fixation, supplies CO(2) to ribulose bisphosphate carboxylase (RuBisCO) in the carboxysome. Also hydrolyzes COS. Beta-carboxysome assembly initiates when soluble RuBisCO is condensed into a liquid matrix in a pre-carboxysome by the RbcS-like domains of probably both forms of CcmM. CcmN interacts with the N-terminus of full length CcmM, and then recruits the shell proteins (CcmK) via CcmN's encapsulation peptide. Shell formation requires both CcmK proteins and CcmO. CcmL caps the otherwise elongated carboxysome. Once fully encapsulated carboxysomes are formed, they migrate within the cell probably via interactions with the cytoskeleton. In Nostoc sp. (strain PCC 7120 / SAG 25.82 / UTEX 2576), this protein is Carboxysome assembly protein CcmM.